We begin with the raw amino-acid sequence, 114 residues long: Adapter SH3BGRL (114 aa).

The interval 13-50 (STAIKKKQQDVLGFLEANKIGFEEKDIAANEENRKWMR) is required for interaction with HER2. Residues 54 to 71 (PENSRPATGYPLPPQIFN) are required for interaction with PFN1, HER2, and ATG12. The short motif at 61–67 (TGYPLPP) is the SH3-binding element.

It belongs to the SH3BGR family. In terms of assembly, monomer. Interacts with PFN1/Profilin-1. Interacts with ERBB2. Interacts with ATG12. Interacts with BECN1. Interacts with translating ribosomes. As to expression, ubiquitous.

The protein resides in the cytoplasm. It localises to the cytosol. The protein localises to the cell membrane. Functionally, appears to function as an adapter protein that bridges proteins together or proteins with mRNAs. May function as a ubiquitin ligase-substrate adapter. Additionally, associates with translating cytoplasmic ribosomes and may promote the expression of specific mRNAs. This is Adapter SH3BGRL from Homo sapiens (Human).